The chain runs to 112 residues: Large ribosomal subunit protein bL17 (112 aa).

Belongs to the bacterial ribosomal protein bL17 family. Part of the 50S ribosomal subunit. Contacts protein L32.

This chain is Large ribosomal subunit protein bL17, found in Carboxydothermus hydrogenoformans (strain ATCC BAA-161 / DSM 6008 / Z-2901).